Consider the following 259-residue polypeptide: Ribonuclease PH (259 aa).

Phosphate contacts are provided by residues Arg-88 and 126-128 (GTR).

This sequence belongs to the RNase PH family. As to quaternary structure, homohexameric ring arranged as a trimer of dimers.

The enzyme catalyses tRNA(n+1) + phosphate = tRNA(n) + a ribonucleoside 5'-diphosphate. Its function is as follows. Phosphorolytic 3'-5' exoribonuclease that plays an important role in tRNA 3'-end maturation. Removes nucleotide residues following the 3'-CCA terminus of tRNAs; can also add nucleotides to the ends of RNA molecules by using nucleoside diphosphates as substrates, but this may not be physiologically important. Probably plays a role in initiation of 16S rRNA degradation (leading to ribosome degradation) during starvation. In Mycobacterium ulcerans (strain Agy99), this protein is Ribonuclease PH.